Reading from the N-terminus, the 428-residue chain is 3-phosphoshikimate 1-carboxyvinyltransferase (428 aa).

3 residues coordinate 3-phosphoshikimate: Lys-21, Ser-22, and Arg-26. Lys-21 contributes to the phosphoenolpyruvate binding site. Residues Gly-91 and Arg-119 each coordinate phosphoenolpyruvate. Residues Ser-164, Gln-166, Asp-313, and Lys-340 each contribute to the 3-phosphoshikimate site. Position 166 (Gln-166) interacts with phosphoenolpyruvate. The active-site Proton acceptor is Asp-313. Positions 344 and 386 each coordinate phosphoenolpyruvate.

The protein belongs to the EPSP synthase family. In terms of assembly, monomer.

Its subcellular location is the cytoplasm. The catalysed reaction is 3-phosphoshikimate + phosphoenolpyruvate = 5-O-(1-carboxyvinyl)-3-phosphoshikimate + phosphate. It functions in the pathway metabolic intermediate biosynthesis; chorismate biosynthesis; chorismate from D-erythrose 4-phosphate and phosphoenolpyruvate: step 6/7. Its function is as follows. Catalyzes the transfer of the enolpyruvyl moiety of phosphoenolpyruvate (PEP) to the 5-hydroxyl of shikimate-3-phosphate (S3P) to produce enolpyruvyl shikimate-3-phosphate and inorganic phosphate. This Campylobacter jejuni (strain RM1221) protein is 3-phosphoshikimate 1-carboxyvinyltransferase.